A 294-amino-acid chain; its full sequence is MAMKRNPSRVFCAYSKNGTHRSAAPTTHRCIAGGGRGALDAGAENTQGHPESRCFPGGRPPQTGPSWCLGAAFRRAFLIDDAWRPLLEPELANPLTARLLAEYDRRCQTEEVLPPREDVFSWTRYCTPDDVRVVIIGQDPYHHPGQAHGLAFSVRADVPVPPSLRNVLAAVKNCYPDARMSGRGCLEKWARDGVLLLNTTLTVKRGAAASTSKLGWDRFVGGVVRRLAARRPGLVFMLWGAHAQNAIRPDPRQHYVLKFSHPSPLSKVPFGTCQHFLAANRYLETRDIMPITVV.

Asp-139 acts as the Proton acceptor in catalysis.

The protein belongs to the uracil-DNA glycosylase (UDG) superfamily. UNG family.

The protein resides in the host nucleus. The enzyme catalyses Hydrolyzes single-stranded DNA or mismatched double-stranded DNA and polynucleotides, releasing free uracil.. In terms of biological role, excises uracil residues from the DNA which can arise as a result of misincorporation of dUMP residues by DNA polymerase or deamination of cytosines. Therefore may reduce deleterious uracil incorporation into the viral genome, particularly in terminally differentiated cells which lack DNA repair enzymes. The protein is Uracil-DNA glycosylase (UL2) of Human herpesvirus 2 (strain 333) (HHV-2).